A 525-amino-acid chain; its full sequence is Potassium voltage-gated channel subfamily A member 3 (525 aa).

The segment at 1–23 (MTVVPGDHLLEPEAAGGGGGDPP) is disordered. Over 1-184 (MTVVPGDHLL…EYPESSGPAR (184 aa)) the chain is Cytoplasmic. The chain crosses the membrane as a helical span at residues 185-203 (GIAIVSVLVILISIVIFCL). Residues 204-244 (ETLPEFRDEKDYPASPSQDVFEAANNSTSGASSGASSFSDP) are Extracellular-facing. N-linked (GlcNAc...) asparagine glycosylation occurs at Asn-229. Residues 245–266 (FFVVETLCIIWFSFELLVRFFA) form a helical membrane-spanning segment. Cys-267 carries the S-palmitoyl cysteine lipid modification. Residues 267–277 (CPSKATFSRNI) lie on the Cytoplasmic side of the membrane. Residues 278 to 298 (MNLIDIVAIIPYFITLGTELA) form a helical membrane-spanning segment. Topologically, residues 299 to 312 (ERQGNGQQAMSLAI) are extracellular. Residues 313–331 (LRVIRLVRVFRIFKLSRHS) form a helical; Voltage-sensor membrane-spanning segment. Residues 332–347 (KGLQILGQTLKASMRE) are Cytoplasmic-facing. The helical transmembrane segment at 348–367 (LGLLIFFLFIGVILFSSAVY) threads the bilayer. The Extracellular segment spans residues 368-408 (FAEADDPSSGFNSIPDAFWWAVVTMTTVGYGDMHPVTIGGK). The Selectivity filter signature appears at 394-399 (TVGYGD). The chain crosses the membrane as a helical span at residues 409–431 (IVGSLCAIAGVLTIALPVPVIVS). The Cytoplasmic segment spans residues 432–525 (NFNYFYHRET…VNIKKIFTDV (94 aa)). The tract at residues 432 to 525 (NFNYFYHRET…VNIKKIFTDV (94 aa)) is interaction with KCNE4. Tyr-449 is subject to Phosphotyrosine. Position 470 is a phosphoserine; by PKA (Ser-470). The PDZ-binding motif lies at 523-525 (TDV).

This sequence belongs to the potassium channel family. A (Shaker) (TC 1.A.1.2) subfamily. Kv1.3/KCNA3 sub-subfamily. As to quaternary structure, homotetramer. Forms heterooligomers with KCNE4 which inhibits KCNA3 activity by impairing localization to the cell membrane. The stoichiometry of KCNA3 and KCNE4 in the heterooligomers are 4:1, 4:2, 4:3 or 4:4 respectively. Increasing the number of KCNE4 subunits steadily slows the activation KCNA3 and decreases its abundance at the cell membrane. However, a single subunit of KCNE4 is sufficient for the cooperative enhancement of the inactivating function of the channel. Interacts with SEC24D; this interaction is reduced in the presence of KCNE4. Interacts with DLG1, DLG2 and DLG4 via their PDZ domains. In terms of processing, phosphorylation on Tyr-449 inhibits its channel activity. Post-translationally, N-glycosylation promotes the cell surface expression.

It localises to the cell membrane. The enzyme catalyses K(+)(in) = K(+)(out). With respect to regulation, activity is up-regulated by JAK2. Mediates the voltage-dependent potassium ion permeability of excitable membranes. Assuming opened or closed conformations in response to the voltage difference across the membrane, the protein forms a potassium-selective channel through which potassium ions may pass in accordance with their electrochemical gradient. The chain is Potassium voltage-gated channel subfamily A member 3 (Kcna3) from Rattus norvegicus (Rat).